The sequence spans 200 residues: Recombination protein RecR (200 aa).

A C4-type zinc finger spans residues 57-72; that stretch reads CDSCQNFSDTEICQIC. The Toprim domain maps to 80 to 175; it reads GTLCVVESPS…LITRLAHGIP (96 aa).

It belongs to the RecR family.

May play a role in DNA repair. It seems to be involved in an RecBC-independent recombinational process of DNA repair. It may act with RecF and RecO. In Marinobacter nauticus (strain ATCC 700491 / DSM 11845 / VT8) (Marinobacter aquaeolei), this protein is Recombination protein RecR.